Consider the following 84-residue polypeptide: Exodeoxyribonuclease 7 small subunit (84 aa).

It belongs to the XseB family. As to quaternary structure, heterooligomer composed of large and small subunits.

The protein resides in the cytoplasm. It catalyses the reaction Exonucleolytic cleavage in either 5'- to 3'- or 3'- to 5'-direction to yield nucleoside 5'-phosphates.. Its function is as follows. Bidirectionally degrades single-stranded DNA into large acid-insoluble oligonucleotides, which are then degraded further into small acid-soluble oligonucleotides. This Bartonella quintana (strain Toulouse) (Rochalimaea quintana) protein is Exodeoxyribonuclease 7 small subunit.